The following is a 296-amino-acid chain: Putative peptide transport system permease protein BRA1093/BS1330_II1085 (296 aa).

The next 6 helical transmembrane spans lie at 35-55 (IGLV…WITN), 97-117 (LWIG…IGIA), 131-151 (VMDA…SAAL), 205-225 (ILPN…AYAI), 229-249 (ATLS…GSIV), and 260-280 (WWIM…INLI). Residues 97 to 281 (LWIGLTVAVL…ISALAINLIG (185 aa)) enclose the ABC transmembrane type-1 domain.

The protein belongs to the binding-protein-dependent transport system permease family. The complex is composed of two ATP-binding proteins (BRA1094), two transmembrane proteins (BRA1092 and BRA1093) and a solute-binding protein (BRA1090).

The protein resides in the cell inner membrane. In terms of biological role, probably part of an ABC transporter complex that could be involved in peptide import. Probably responsible for the translocation of the substrate across the membrane. The protein is Putative peptide transport system permease protein BRA1093/BS1330_II1085 of Brucella suis biovar 1 (strain 1330).